A 184-amino-acid polypeptide reads, in one-letter code: Thylakoid membrane protein slr0575 (184 aa).

A run of 2 helical transmembrane segments spans residues 5-25 (ISLA…GFVA) and 31-51 (ATLN…GLAL).

It is found in the cellular thylakoid membrane. The protein is Thylakoid membrane protein slr0575 of Synechocystis sp. (strain ATCC 27184 / PCC 6803 / Kazusa).